Consider the following 187-residue polypeptide: ATP synthase subunit delta, chloroplastic (187 aa).

This sequence belongs to the ATPase delta chain family. F-type ATPases have 2 components, F(1) - the catalytic core - and F(0) - the membrane proton channel. F(1) has five subunits: alpha(3), beta(3), gamma(1), delta(1), epsilon(1). CF(0) has four main subunits: a(1), b(1), b'(1) and c(10-14). The alpha and beta chains form an alternating ring which encloses part of the gamma chain. F(1) is attached to F(0) by a central stalk formed by the gamma and epsilon chains, while a peripheral stalk is formed by the delta, b and b' chains.

It localises to the plastid. It is found in the chloroplast thylakoid membrane. Functionally, f(1)F(0) ATP synthase produces ATP from ADP in the presence of a proton or sodium gradient. F-type ATPases consist of two structural domains, F(1) containing the extramembraneous catalytic core and F(0) containing the membrane proton channel, linked together by a central stalk and a peripheral stalk. During catalysis, ATP synthesis in the catalytic domain of F(1) is coupled via a rotary mechanism of the central stalk subunits to proton translocation. This protein is part of the stalk that links CF(0) to CF(1). It either transmits conformational changes from CF(0) to CF(1) or is implicated in proton conduction. The sequence is that of ATP synthase subunit delta, chloroplastic from Trieres chinensis (Marine centric diatom).